Reading from the N-terminus, the 162-residue chain is Phenazine biosynthesis protein PhzA2 (162 aa).

The protein belongs to the PhzA/PhzB family.

It functions in the pathway antibiotic biosynthesis; phenazine biosynthesis. Involved in the biosynthesis of the antibiotic phenazine, a nitrogen-containing heterocyclic molecule having important roles in virulence, competition and biological control. PhzA2 (operon phzA2B2C2E2F2G2) has a role in the biosynthesis of the phenazine during both planktonic growth and biofilm development, and in host infection during biofilm development. The sequence is that of Phenazine biosynthesis protein PhzA2 from Pseudomonas aeruginosa (strain ATCC 15692 / DSM 22644 / CIP 104116 / JCM 14847 / LMG 12228 / 1C / PRS 101 / PAO1).